The following is a 220-amino-acid chain: Orotidine 5'-phosphate decarboxylase (220 aa).

Residues D12, K34, D60–T69, S117, P170–S180, G193, and R194 contribute to the substrate site. K62 functions as the Proton donor in the catalytic mechanism.

The protein belongs to the OMP decarboxylase family. Type 1 subfamily. In terms of assembly, homodimer.

It carries out the reaction orotidine 5'-phosphate + H(+) = UMP + CO2. The protein operates within pyrimidine metabolism; UMP biosynthesis via de novo pathway; UMP from orotate: step 2/2. Its function is as follows. Catalyzes the decarboxylation of orotidine 5'-monophosphate (OMP) to uridine 5'-monophosphate (UMP). This chain is Orotidine 5'-phosphate decarboxylase, found in Methanosarcina mazei (strain ATCC BAA-159 / DSM 3647 / Goe1 / Go1 / JCM 11833 / OCM 88) (Methanosarcina frisia).